The chain runs to 99 residues: UPF0320 protein YER188C-A (99 aa).

It belongs to the UPF0320 family.

In Saccharomyces cerevisiae (strain ATCC 204508 / S288c) (Baker's yeast), this protein is UPF0320 protein YER188C-A.